Reading from the N-terminus, the 183-residue chain is UPF0397 protein VFMJ11_1662 (183 aa).

Transmembrane regions (helical) follow at residues 8-28 (VVVI…MFGI), 41-61 (AVLA…VGFI), 75-95 (WLTW…FPII), 110-130 (FLIF…TSAF), and 147-167 (LCII…FILN).

It belongs to the UPF0397 family.

Its subcellular location is the cell membrane. The chain is UPF0397 protein VFMJ11_1662 from Aliivibrio fischeri (strain MJ11) (Vibrio fischeri).